The primary structure comprises 500 residues: Glycerol kinase (500 aa).

Residue T11 participates in ADP binding. Residues T11, T12, and S13 each coordinate ATP. T11 is a sn-glycerol 3-phosphate binding site. R15 is a binding site for ADP. Residues R81, E82, Y133, and D242 each coordinate sn-glycerol 3-phosphate. Positions 81, 82, 133, 242, and 243 each coordinate glycerol. ADP-binding residues include T264 and G307. Residues T264, G307, Q311, and G411 each coordinate ATP. G411 serves as a coordination point for ADP.

It belongs to the FGGY kinase family.

The catalysed reaction is glycerol + ATP = sn-glycerol 3-phosphate + ADP + H(+). It functions in the pathway polyol metabolism; glycerol degradation via glycerol kinase pathway; sn-glycerol 3-phosphate from glycerol: step 1/1. With respect to regulation, inhibited by fructose 1,6-bisphosphate (FBP). Key enzyme in the regulation of glycerol uptake and metabolism. Catalyzes the phosphorylation of glycerol to yield sn-glycerol 3-phosphate. In Bradyrhizobium sp. (strain ORS 278), this protein is Glycerol kinase.